The sequence spans 280 residues: Adenosylcobinamide-GDP ribazoletransferase (280 aa).

7 consecutive transmembrane segments (helical) span residues 4–24, 34–54, 58–78, 108–128, 136–156, 197–217, and 254–274; these read YLLA…GITM, IFFY…VAYA, VFPG…ITGF, TLGT…YGSI, IAAF…IAEV, LIGF…IGLI, and ITAL…YLGG.

It belongs to the CobS family. Mg(2+) serves as cofactor.

The protein resides in the cell membrane. It catalyses the reaction alpha-ribazole + adenosylcob(III)inamide-GDP = adenosylcob(III)alamin + GMP + H(+). It carries out the reaction alpha-ribazole 5'-phosphate + adenosylcob(III)inamide-GDP = adenosylcob(III)alamin 5'-phosphate + GMP + H(+). It participates in cofactor biosynthesis; adenosylcobalamin biosynthesis; adenosylcobalamin from cob(II)yrinate a,c-diamide: step 7/7. Joins adenosylcobinamide-GDP and alpha-ribazole to generate adenosylcobalamin (Ado-cobalamin). Also synthesizes adenosylcobalamin 5'-phosphate from adenosylcobinamide-GDP and alpha-ribazole 5'-phosphate. The protein is Adenosylcobinamide-GDP ribazoletransferase of Methanosarcina mazei (strain ATCC BAA-159 / DSM 3647 / Goe1 / Go1 / JCM 11833 / OCM 88) (Methanosarcina frisia).